A 337-amino-acid chain; its full sequence is Major envelope glycoprotein (337 aa).

N-linked (GlcNAc...) asparagine; by host glycosylation is found at N76, N114, N271, and N301.

Belongs to the baculoviridae gp64 family. Palmitoylated.

The protein localises to the virion membrane. It is found in the host cell membrane. Its function is as follows. Envelope phosphoglycoprotein which mediates the fusion of viral and host endosomal membranes leading to virus entry into the host cell. The polypeptide is Major envelope glycoprotein (GP67) (Lepidoptera (butterflies and moths)).